The chain runs to 502 residues: Chromatin structure-remodeling complex protein RSC58 (502 aa).

One can recognise a Bromo domain in the interval 19–134 (SILNAASVKC…KFSSELLLRE (116 aa)). The tract at residues 336-378 (NEEGINRKQNDENNKNVDGKSNGVQDDGGDNDNDATIASANSE) is disordered. Basic and acidic residues predominate over residues 339–353 (GINRKQNDENNKNVD).

As to quaternary structure, component of the two forms of the RSC complex composed of at least either RSC1 or RSC2, and ARP7, ARP9, LDB7, NPL6, RSC3, RSC30, RSC4, RSC58, RSC6, RSC8, RSC9, SFH1, STH1, HTL1 and probably RTT102. The complexes interact with histone and histone variant components of centromeric chromatin.

Its subcellular location is the nucleus. Component of the chromatin structure-remodeling complex (RSC), which is involved in transcription regulation and nucleosome positioning. RSC is responsible for the transfer of a histone octamer from a nucleosome core particle to naked DNA. The reaction requires ATP and involves an activated RSC-nucleosome intermediate. Remodeling reaction also involves DNA translocation, DNA twist and conformational change. As a reconfigurer of centromeric and flanking nucleosomes, RSC complex is required both for proper kinetochore function in chromosome segregation and, via a PKC1-dependent signaling pathway, for organization of the cellular cytoskeleton. This is Chromatin structure-remodeling complex protein RSC58 (RSC58) from Saccharomyces cerevisiae (strain ATCC 204508 / S288c) (Baker's yeast).